A 54-amino-acid polypeptide reads, in one-letter code: Large ribosomal subunit protein bL33A (54 aa).

It belongs to the bacterial ribosomal protein bL33 family.

This Myxococcus xanthus (strain DK1622) protein is Large ribosomal subunit protein bL33A.